The sequence spans 329 residues: MWGLKVLLLPVMSFALYPEEILDTHWELWKKTHRKQYNSKVDEISRRLIWEKNLKYISIHNLEASLGVHTYELAMNHLGDMTNEEVVQKMTGLKVPASHSRSNDTLYIPDWEGRAPDSVDYRKKGYVTPVKNQGQCGSCWAFSSVGALEGQLKKKTGKLLNLSPQNLVDCVSENDGCGGGYMTNAFQYVQKNRGIDSEDAYPYVGQEESCMYNPTGKAAKCRGYREIPEGNEKALKRAVARVGPVSVAIDASLTSFQFYSKGVYYDESCNSDNLNHAVLAVGYGIQKGNKHWIIKNSWGENWGNKGYILMARNKNNACGIANLASFPKM.

The N-terminal stretch at 1-15 is a signal peptide; it reads MWGLKVLLLPVMSFA. Residues 16–114 constitute a propeptide, activation peptide; the sequence is LYPEEILDTH…TLYIPDWEGR (99 aa). An N-linked (GlcNAc...) asparagine glycan is attached at Asn-103. 3 cysteine pairs are disulfide-bonded: Cys-136-Cys-177, Cys-170-Cys-210, and Cys-269-Cys-318. The active site involves Cys-139. Residues His-276 and Asn-296 contribute to the active site.

This sequence belongs to the peptidase C1 family.

Its subcellular location is the lysosome. The protein localises to the secreted. It is found in the apical cell membrane. It carries out the reaction Broad proteolytic activity. With small-molecule substrates and inhibitors, the major determinant of specificity is P2, which is preferably Leu, Met &gt; Phe, and not Arg.. Thiol protease involved in osteoclastic bone resorption and may participate partially in the disorder of bone remodeling. Displays potent endoprotease activity against fibrinogen at acid pH. May play an important role in extracellular matrix degradation. Involved in the release of thyroid hormone thyroxine (T4) by limited proteolysis of TG/thyroglobulin in the thyroid follicle lumen. This is Cathepsin K (CTSK) from Macaca fascicularis (Crab-eating macaque).